Here is a 141-residue protein sequence, read N- to C-terminus: Hemoglobin subunit alpha-3 (141 aa).

The Globin domain occupies 1-141 (VLSPADKTNV…VSTVLTSKYR (141 aa)). Position 58 (histidine 58) interacts with O2. Residue histidine 87 participates in heme b binding.

The protein belongs to the globin family. As to quaternary structure, heterotetramer of two alpha chains and two beta chains. In terms of tissue distribution, red blood cells.

Its function is as follows. Involved in oxygen transport from the lung to the various peripheral tissues. This chain is Hemoglobin subunit alpha-3, found in Gorilla gorilla gorilla (Western lowland gorilla).